The following is a 161-amino-acid chain: MEKPLTVLRVSLYHPTLGPSAFANVPPRLQHDTSPLLLGRGQDAHLQLQLPRLSRRHLSLEPYLEKGSALLAFCLKALSRKGCVWVNGLTLRYLEQVPLSTVNRVSFSGIQMLVRVEEGTSLEAFVCYFHVSPSPLIYRPEAEETDEWEGISQGQPPPGSG.

Residues 36–91 (LLLGRGQDAHLQLQLPRLSRRHLSLEPYLEKGSALLAFCLKALSRKGCVWVNGLTL) form the FHA domain.

As to quaternary structure, interacts with TIFA.

Inhibits TIFA-mediated TRAF6 activation possibly by inducing a conformational change in TIFA. The sequence is that of TRAF-interacting protein with FHA domain-containing protein B from Homo sapiens (Human).